Consider the following 50-residue polypeptide: Conotoxin Cal6.19 (50 aa).

The N-terminal stretch at 1–22 is a signal peptide; that stretch reads MKVTCVLVLTLMALTVCQVATA. 3 cysteine pairs are disulfide-bonded: Cys-24–Cys-37, Cys-30–Cys-41, and Cys-36–Cys-46.

Expressed by the venom duct.

Its subcellular location is the secreted. In terms of biological role, probable neurotoxin. This chain is Conotoxin Cal6.19, found in Californiconus californicus (California cone).